Consider the following 227-residue polypeptide: Ribose-5-phosphate isomerase A (227 aa).

Substrate-binding positions include 26–29 (TGST), 82–85 (DGAD), and 95–98 (KGGG). The active-site Proton acceptor is the Glu-104. Lys-122 is a binding site for substrate.

This sequence belongs to the ribose 5-phosphate isomerase family. Homodimer.

It catalyses the reaction aldehydo-D-ribose 5-phosphate = D-ribulose 5-phosphate. Its pathway is carbohydrate degradation; pentose phosphate pathway; D-ribose 5-phosphate from D-ribulose 5-phosphate (non-oxidative stage): step 1/1. Its function is as follows. Catalyzes the reversible conversion of ribose-5-phosphate to ribulose 5-phosphate. This is Ribose-5-phosphate isomerase A from Streptococcus pyogenes serotype M1.